The sequence spans 246 residues: Ribonuclease 3 (246 aa).

Residues 16 to 146 enclose the RNase III domain; the sequence is ATELEAGIGY…LLAAVYLDGG (131 aa). E59 contributes to the Mg(2+) binding site. D63 is a catalytic residue. 2 residues coordinate Mg(2+): N132 and E135. The active site involves E135. The 70-residue stretch at 173 to 242 folds into the DRBM domain; that stretch reads DFKTEFQEMV…ARQVLARFAA (70 aa).

It belongs to the ribonuclease III family. Homodimer. Mg(2+) serves as cofactor.

The protein localises to the cytoplasm. The enzyme catalyses Endonucleolytic cleavage to 5'-phosphomonoester.. Its function is as follows. Digests double-stranded RNA. Involved in the processing of primary rRNA transcript to yield the immediate precursors to the large and small rRNAs (23S and 16S). Processes some mRNAs, and tRNAs when they are encoded in the rRNA operon. Processes pre-crRNA and tracrRNA of type II CRISPR loci if present in the organism. This Geobacter metallireducens (strain ATCC 53774 / DSM 7210 / GS-15) protein is Ribonuclease 3.